The chain runs to 326 residues: WD repeat-containing protein slr1409 (326 aa).

WD repeat units follow at residues 47–77, 88–118, 129–159, 169–199, 210–240, and 252–282; these read GSDV…TLWT, GQKP…RLWN, PHRA…KIFT, LKSG…HLIN, TGQG…KLWN, and VPTG…RFWQ.

The protein is WD repeat-containing protein slr1409 of Synechocystis sp. (strain ATCC 27184 / PCC 6803 / Kazusa).